The sequence spans 415 residues: Thyroxine-binding globulin (415 aa).

Residues 1–20 (MSPFLYLVLLVLGLHATIHC) form the signal peptide. N36 carries an N-linked (GlcNAc...) (complex) asparagine glycan. Residue N99 is glycosylated (N-linked (GlcNAc...) asparagine). N-linked (GlcNAc...) asparagine; in variant Gary glycosylation is present at I116. N165 and N253 each carry an N-linked (GlcNAc...) asparagine glycan. Thyroxine contacts are provided by N293 and R398.

Belongs to the serpin family. Expressed by the liver and secreted in plasma.

It localises to the secreted. Major thyroid hormone transport protein in serum. In Homo sapiens (Human), this protein is Thyroxine-binding globulin (SERPINA7).